Consider the following 369-residue polypeptide: Succinyl-diaminopimelate desuccinylase (369 aa).

Histidine 77 serves as a coordination point for Zn(2+). Aspartate 79 is an active-site residue. Aspartate 103 serves as a coordination point for Zn(2+). The Proton acceptor role is filled by glutamate 136. Zn(2+) is bound by residues glutamate 137, glutamate 165, and histidine 345.

Belongs to the peptidase M20A family. Zn(2+) serves as cofactor. It depends on Co(2+) as a cofactor.

The catalysed reaction is N-succinyl-(2S,6S)-2,6-diaminopimelate + H2O = (2S,6S)-2,6-diaminopimelate + succinate. The protein operates within amino-acid biosynthesis; L-lysine biosynthesis via DAP pathway; LL-2,6-diaminopimelate from (S)-tetrahydrodipicolinate (succinylase route): step 3/3. The sequence is that of Succinyl-diaminopimelate desuccinylase (dapE) from Corynebacterium glutamicum (strain ATCC 13032 / DSM 20300 / JCM 1318 / BCRC 11384 / CCUG 27702 / LMG 3730 / NBRC 12168 / NCIMB 10025 / NRRL B-2784 / 534).